The chain runs to 147 residues: Hemoglobin subunit beta (147 aa).

V2 bears the N-acetylvaline mark. The Globin domain occupies 3–147; that stretch reads HLTGEEKAAV…VANALAHKYH (145 aa). T13 carries the post-translational modification Phosphothreonine. S45 is modified (phosphoserine). K60 is modified (N6-acetyllysine). H64 provides a ligand contact to heme b. K83 carries the N6-acetyllysine modification. Position 93 (H93) interacts with heme b. C94 carries the S-nitrosocysteine modification. K145 bears the N6-acetyllysine mark.

Belongs to the globin family. In terms of assembly, heterotetramer of two alpha chains and two beta chains. In terms of tissue distribution, red blood cells.

Functionally, involved in oxygen transport from the lung to the various peripheral tissues. This is Hemoglobin subunit beta (HBB) from Ateles belzebuth (White-bellied spider monkey).